A 120-amino-acid polypeptide reads, in one-letter code: MFLLHEYDIFWAFLIISSVIPILAFLISGVLAPISEGPEKLSSYESGIEPMGDAWLQFRIRYYMFALVFVVFDVETVFLYPWAMSFDVLGVPVFIEALIFVLILIVGSVYAWRKGALEWS.

3 consecutive transmembrane segments (helical) span residues 9 to 29, 64 to 84, and 88 to 108; these read IFWA…LISG, MFAL…PWAM, and VLGV…IVGS.

Belongs to the complex I subunit 3 family. As to quaternary structure, NDH is composed of at least 16 different subunits, 5 of which are encoded in the nucleus.

It localises to the plastid. The protein localises to the chloroplast thylakoid membrane. It carries out the reaction a plastoquinone + NADH + (n+1) H(+)(in) = a plastoquinol + NAD(+) + n H(+)(out). The enzyme catalyses a plastoquinone + NADPH + (n+1) H(+)(in) = a plastoquinol + NADP(+) + n H(+)(out). NDH shuttles electrons from NAD(P)H:plastoquinone, via FMN and iron-sulfur (Fe-S) centers, to quinones in the photosynthetic chain and possibly in a chloroplast respiratory chain. The immediate electron acceptor for the enzyme in this species is believed to be plastoquinone. Couples the redox reaction to proton translocation, and thus conserves the redox energy in a proton gradient. In Platanus occidentalis (Sycamore), this protein is NAD(P)H-quinone oxidoreductase subunit 3, chloroplastic.